We begin with the raw amino-acid sequence, 95 residues long: uncharacterized protein (95 aa).

This is an uncharacterized protein from Bacillus subtilis (strain 168).